The following is a 294-amino-acid chain: Putative isocitrate dehydrogenase [NAD] subunit-like 4 (294 aa).

The protein belongs to the isocitrate and isopropylmalate dehydrogenases family.

Functionally, performs an essential role in the oxidative function of the citric acid cycle. In Arabidopsis thaliana (Mouse-ear cress), this protein is Putative isocitrate dehydrogenase [NAD] subunit-like 4 (IDH4).